A 386-amino-acid chain; its full sequence is Sphingosine 1-phosphate receptor 4 (386 aa).

Residues methionine 1–serine 56 are Extracellular-facing. Residues asparagine 2 and asparagine 32 are each glycosylated (N-linked (GlcNAc...) asparagine). The helical transmembrane segment at valine 57–tyrosine 77 threads the bilayer. The Cytoplasmic portion of the chain corresponds to methionine 78–cysteine 87. A helical membrane pass occupies residues leucine 88 to leucine 108. The Extracellular segment spans residues serine 109 to histidine 120. Residues tryptophan 121 to phenylalanine 141 traverse the membrane as a helical segment. Topologically, residues threonine 142–arginine 163 are cytoplasmic. Residues valine 164 to leucine 184 traverse the membrane as a helical segment. Topologically, residues glycine 185–leucine 208 are extracellular. The chain crosses the membrane as a helical span at residues phenylalanine 209–phenylalanine 229. Topologically, residues arginine 230–threonine 254 are cytoplasmic. The helical transmembrane segment at valine 255 to alanine 275 threads the bilayer. Over aspartate 276–glycine 290 the chain is Extracellular. The helical transmembrane segment at methionine 291–phenylalanine 311 threads the bilayer. Residues arginine 312–threonine 386 lie on the Cytoplasmic side of the membrane. Cysteine 325 carries the S-palmitoyl cysteine lipid modification.

This sequence belongs to the G-protein coupled receptor 1 family. As to expression, specifically expressed in fetal and adult lymphoid and hematopoietic tissue. Expressed in lung, spleen, thymus and lymph node but absent in other non-lymphatic tissue. Coexpressed with GNA15 at the same relative levels in all tissues examined, with the highest levels in adult spleen and lung.

The protein resides in the cell membrane. Receptor for the lysosphingolipid sphingosine 1-phosphate (S1P). S1P is a bioactive lysophospholipid that elicits diverse physiological effect on most types of cells and tissues. May be involved in cell migration processes that are specific for lymphocytes. In Mus musculus (Mouse), this protein is Sphingosine 1-phosphate receptor 4 (S1pr4).